Consider the following 318-residue polypeptide: Ferrochelatase (318 aa).

2 residues coordinate Fe cation: His-194 and Glu-275.

It belongs to the ferrochelatase family.

The protein resides in the cytoplasm. It carries out the reaction heme b + 2 H(+) = protoporphyrin IX + Fe(2+). It participates in porphyrin-containing compound metabolism; protoheme biosynthesis; protoheme from protoporphyrin-IX: step 1/1. Functionally, catalyzes the ferrous insertion into protoporphyrin IX. The chain is Ferrochelatase from Xanthomonas axonopodis pv. citri (strain 306).